Reading from the N-terminus, the 416-residue chain is MLTRSILSVAVCGLLLSPLLPITRASQEEDTGKQDKQFTVELDPETFDTAIAGGNVFVKFFAPWCGHCKRIQPLWEQLAEIMNVDNPKVIIAKVDCTKHQGLCATHQVTGYPTLRLFKLGEEESVKFKGTRDLPAITDFINKELSAPAEADLGEVKREQVENLNIGKVVDLTEDTFAKHVSTGNHFVKFFAPWCSHCQRLAPTWEDLAKELIKEPTVTISKIDCTQFRSICQDFEVKGYPTLLWIEDGKKIEKYSGARDLSTLKTYVEKMVGVPLEKTAGEAGDEKVVIEEVAGEEDAAKKLTPQQLTGEDEFDQAIAEGVAFIKFYAPWCGHCQKLQPTWEQLATETHQAQSSVKIAKVDCTAPENKQVCIDQQVEGYPTLFLYKNGQRQNEYEGSRSLPELQAYLKKFLGHDEL.

The first 25 residues, 1–25 (MLTRSILSVAVCGLLLSPLLPITRA), serve as a signal peptide directing secretion. Thioredoxin domains follow at residues 26 to 145 (SQEE…KELS), 150 to 272 (ADLG…KMVG), and 293 to 412 (AGEE…KFLG). 3 disulfide bridges follow: Cys65/Cys68, Cys194/Cys197, and Cys331/Cys334. The Prevents secretion from ER signature appears at 413 to 416 (HDEL).

The protein belongs to the protein disulfide isomerase family.

The protein resides in the endoplasmic reticulum. Its subcellular location is the cell surface. In terms of biological role, possesses thioredoxin activity. Acts as a ligand for Drpr and is required for the phagocytosis of apoptotic cells. Binds to the extracellular region of Drpr and augments Drpr tyrosine phosphorylation. This chain is Thioredoxin domain-containing protein 5 homolog, found in Drosophila melanogaster (Fruit fly).